A 779-amino-acid chain; its full sequence is MIAMDRIARIPIARWTSRAFRVSAAARQTPMSPLEAHNELEPVYAAIDDRLNTVRSKLNRPLTLAEKVLYGHLDDPERVPVRGETFLKLRPERVALQDATAQMALIQFMASARPQVAVPSTIHCDHLIAAEVGAEEDMAKAKSQNKEVYDFLASAGAKYGLGFWKPGSGIIHQIVLENYAFPGLLMIGTDSHTPNAGGLGACAVGVGGADAVDVMVGLPWELKAPKVIGVKLTGKLQEWASPKDVILKVAGILTVKGGTGAIVEYFGEGVDSLSCTGMGTICNMGAEIGATTSMFPYNSRMGDYLKATGRDGIASLADSFSEQLRADENAVYDQLIEINLSELEPHINGPFTPDLAHPLSKFKEEVEKNGWPAELTVGLIGSCTNSSYEDMARSASVVKQALSHGVKSKSIFNITPGSEQVRATISRDGILDTFTEAGGTVLANACGPCIGQWNRSDVPKGTPNSIITSFNRNFSQRNDGNPQTHAFVASPEIVTAMSLAGSLKFNPATDSLQGADGAEFKLAAPSGDELPVMGFDPGEDTFQPPSDDSTSILVQIDPDSQRLSFLEPFPAWDGKDYTDMPVLIKARGKCTTDHISMAGPWLKFRGHLDNISNNMLIGAVNDENGEINNVKNAVTGEYGTVPDTARAYKAEGVKWVVIGDENYGEGSSREHAALEPRHLGGVAVIVKSFARIHETNLKKQGMLPLTFNNPADYDKIDSSDKVSLVGLKNLTPGEPVTMTVTKADGTSMDILLNHTFNDEQLEWFRAGSALNKIKIDLGT.

Residues 1 to 28 (MIAMDRIARIPIARWTSRAFRVSAAARQ) constitute a mitochondrion transit peptide. Residues Q97 and 190–192 (DSH) contribute to the substrate site. [4Fe-4S] cluster-binding residues include C383, C446, and C449. Substrate contacts are provided by residues R472, R477, R605, and 668–669 (SR).

It belongs to the aconitase/IPM isomerase family. In terms of assembly, monomer. Requires [4Fe-4S] cluster as cofactor.

Its subcellular location is the mitochondrion. The enzyme catalyses citrate = D-threo-isocitrate. It participates in carbohydrate metabolism; tricarboxylic acid cycle; isocitrate from oxaloacetate: step 2/2. Catalyzes the isomerization of citrate to isocitrate via cis-aconitate. The chain is Aconitate hydratase, mitochondrial from Gracilaria gracilis (Red alga).